The sequence spans 197 residues: MKTAVIASLIAGAAAFAPAKNAARTSVATNMAFEDELGAQPPLGFFDPLGLVADGDQEKFDRLRYVEIKHGRISMLAVVGYLVQEAGVRLPGTIDYSGKTFAEIPKFAAFKEIPAGGLVQLLFFIGVLESSVMRDLTGEAEFVGDFRNGAIDFGWDTFDEETQFKKRAIELNQGRAAQMGILAFMVHEQLGVSLLPQ.

The transit peptide at Met1–Met31 directs the protein to the chloroplast. A run of 3 helical transmembrane segments spans residues Ile73–Ile94, Ile113–Met133, and Gly174–Pro196.

It belongs to the fucoxanthin chlorophyll protein family. As to quaternary structure, the LHC complex of chromophytic algae is composed of fucoxanthin, chlorophyll A and C bound non-covalently by fucoxanthin chlorophyll proteins (FCPs). The ratio of the pigments in LHC; fucoxanthin: chlorophyll C: chlorophyll A; (0.6-1): (0.1-0.3): (1).

Its subcellular location is the plastid. The protein localises to the chloroplast thylakoid membrane. Functionally, the light-harvesting complex (LHC) functions as a light receptor, it captures and delivers excitation energy to photosystems with which it is closely associated. Energy is transferred from the carotenoid and chlorophyll C (or B) to chlorophyll A and the photosynthetic reaction centers where it is used to synthesize ATP and reducing power. The sequence is that of Fucoxanthin-chlorophyll a-c binding protein C, chloroplastic (FCPC) from Phaeodactylum tricornutum (Diatom).